The primary structure comprises 921 residues: Isoleucine--tRNA ligase (921 aa).

Positions 57-67 match the 'HIGH' region motif; sequence PYANGDIHMGH. Glu552 is a binding site for L-isoleucyl-5'-AMP. Residues 593–597 carry the 'KMSKS' region motif; sequence KMSKS. Lys596 contacts ATP. Zn(2+) contacts are provided by Cys888, Cys891, Cys908, and Cys911.

This sequence belongs to the class-I aminoacyl-tRNA synthetase family. IleS type 1 subfamily. Monomer. Requires Zn(2+) as cofactor.

The protein localises to the cytoplasm. It carries out the reaction tRNA(Ile) + L-isoleucine + ATP = L-isoleucyl-tRNA(Ile) + AMP + diphosphate. Its function is as follows. Catalyzes the attachment of isoleucine to tRNA(Ile). As IleRS can inadvertently accommodate and process structurally similar amino acids such as valine, to avoid such errors it has two additional distinct tRNA(Ile)-dependent editing activities. One activity is designated as 'pretransfer' editing and involves the hydrolysis of activated Val-AMP. The other activity is designated 'posttransfer' editing and involves deacylation of mischarged Val-tRNA(Ile). The polypeptide is Isoleucine--tRNA ligase (Bacillus cereus (strain G9842)).